The chain runs to 199 residues: uncharacterized protein (199 aa).

This is an uncharacterized protein from Treponema pallidum (strain Nichols).